The following is a 316-amino-acid chain: Transaldolase (316 aa).

Lysine 131 functions as the Schiff-base intermediate with substrate in the catalytic mechanism.

The protein belongs to the transaldolase family. Type 1 subfamily. Homodimer.

It localises to the cytoplasm. The catalysed reaction is D-sedoheptulose 7-phosphate + D-glyceraldehyde 3-phosphate = D-erythrose 4-phosphate + beta-D-fructose 6-phosphate. Its pathway is carbohydrate degradation; pentose phosphate pathway; D-glyceraldehyde 3-phosphate and beta-D-fructose 6-phosphate from D-ribose 5-phosphate and D-xylulose 5-phosphate (non-oxidative stage): step 2/3. Its function is as follows. Transaldolase is important for the balance of metabolites in the pentose-phosphate pathway. The polypeptide is Transaldolase (Sodalis glossinidius (strain morsitans)).